We begin with the raw amino-acid sequence, 394 residues long: Acetate kinase (394 aa).

A Mg(2+)-binding site is contributed by Asn-7. Lys-14 provides a ligand contact to ATP. Arg-90 is a binding site for substrate. Catalysis depends on Asp-147, which acts as the Proton donor/acceptor. Residues 204-208 (HLGNG), 278-280 (DLR), and 326-330 (GIGEN) each bind ATP. Glu-380 lines the Mg(2+) pocket.

The protein belongs to the acetokinase family. Homodimer. It depends on Mg(2+) as a cofactor. Mn(2+) is required as a cofactor.

The protein resides in the cytoplasm. The enzyme catalyses acetate + ATP = acetyl phosphate + ADP. The protein operates within metabolic intermediate biosynthesis; acetyl-CoA biosynthesis; acetyl-CoA from acetate: step 1/2. In terms of biological role, catalyzes the formation of acetyl phosphate from acetate and ATP. Can also catalyze the reverse reaction. The chain is Acetate kinase from Flavobacterium johnsoniae (strain ATCC 17061 / DSM 2064 / JCM 8514 / BCRC 14874 / CCUG 350202 / NBRC 14942 / NCIMB 11054 / UW101) (Cytophaga johnsonae).